Consider the following 154-residue polypeptide: Ribonuclease H (154 aa).

Residues 1–142 (MRKQVEIFTD…CDELARAAAS (142 aa)) enclose the RNase H type-1 domain. Aspartate 10, glutamate 48, aspartate 70, and aspartate 134 together coordinate Mg(2+).

Belongs to the RNase H family. Monomer. It depends on Mg(2+) as a cofactor.

The protein localises to the cytoplasm. It catalyses the reaction Endonucleolytic cleavage to 5'-phosphomonoester.. Its function is as follows. Endonuclease that specifically degrades the RNA of RNA-DNA hybrids. The polypeptide is Ribonuclease H (Pectobacterium atrosepticum (strain SCRI 1043 / ATCC BAA-672) (Erwinia carotovora subsp. atroseptica)).